Consider the following 323-residue polypeptide: uncharacterized protein (323 aa).

The tract at residues 1–21 (MGSYYSTESTKSNESNETTNN) is disordered. A lipid anchor (N-myristoyl glycine; by host) is attached at glycine 2.

This is an uncharacterized protein from Acanthamoeba polyphaga (Amoeba).